Reading from the N-terminus, the 543-residue chain is Chaperonin GroEL (543 aa).

ATP-binding positions include 29-32 (TLGP), 86-90 (DGTTT), glycine 413, 476-478 (NAA), and aspartate 492.

Belongs to the chaperonin (HSP60) family. As to quaternary structure, forms a cylinder of 14 subunits composed of two heptameric rings stacked back-to-back. Interacts with the co-chaperonin GroES.

The protein localises to the cytoplasm. It carries out the reaction ATP + H2O + a folded polypeptide = ADP + phosphate + an unfolded polypeptide.. In terms of biological role, together with its co-chaperonin GroES, plays an essential role in assisting protein folding. The GroEL-GroES system forms a nano-cage that allows encapsulation of the non-native substrate proteins and provides a physical environment optimized to promote and accelerate protein folding. The chain is Chaperonin GroEL from Streptococcus pyogenes serotype M49 (strain NZ131).